Consider the following 328-residue polypeptide: DNA-directed RNA polymerase subunit alpha (328 aa).

An alpha N-terminal domain (alpha-NTD) region spans residues 1 to 233 (MHNSATEFLK…EQLEAFIDLR (233 aa)). Residues 247–328 (FDPVLLRPVD…WPPVSILKND (82 aa)) form an alpha C-terminal domain (alpha-CTD) region.

This sequence belongs to the RNA polymerase alpha chain family. Homodimer. The RNAP catalytic core consists of 2 alpha, 1 beta, 1 beta' and 1 omega subunit. When a sigma factor is associated with the core the holoenzyme is formed, which can initiate transcription.

The catalysed reaction is RNA(n) + a ribonucleoside 5'-triphosphate = RNA(n+1) + diphosphate. DNA-dependent RNA polymerase catalyzes the transcription of DNA into RNA using the four ribonucleoside triphosphates as substrates. The chain is DNA-directed RNA polymerase subunit alpha from Wigglesworthia glossinidia brevipalpis.